A 141-amino-acid chain; its full sequence is uncharacterized protein (141 aa).

One can recognise an HIT domain in the interval Ile10–Phe117. Residues His102 to His106 carry the Histidine triad motif motif.

This is an uncharacterized protein from Mycoplasma genitalium (strain ATCC 33530 / DSM 19775 / NCTC 10195 / G37) (Mycoplasmoides genitalium).